Here is a 181-residue protein sequence, read N- to C-terminus: 3-hexulose-6-phosphate isomerase (181 aa).

An SIS domain is found at 27-168; the sequence is ILSLVDAAGR…IAKLVDQKGL (142 aa). Substrate-binding positions include S45 and 84-89; that span reads SGSGST. E148 acts as the Proton acceptor in catalysis.

The protein belongs to the SIS family. PHI subfamily. In terms of assembly, homodimer.

The enzyme catalyses D-arabino-hex-3-ulose 6-phosphate = beta-D-fructose 6-phosphate. It functions in the pathway one-carbon metabolism; formaldehyde assimilation via RuMP pathway; D-fructose 6-phosphate from D-ribulose 5-phosphate and formaldehyde: step 2/2. In terms of biological role, catalyzes the isomerization between 3-hexulose 6-phosphate and fructose 6-phosphate. The polypeptide is 3-hexulose-6-phosphate isomerase (rmpB) (Methylomonas aminofaciens).